The chain runs to 59 residues: MRQLRGKPKKETSKDKKERKQAMQEARQQITTVVLPTLAVVVLLIVVFVYVATRPNTTE.

The tract at residues 1-25 is disordered; the sequence is MRQLRGKPKKETSKDKKERKQAMQE. Residues 9–22 are compositionally biased toward basic and acidic residues; the sequence is KKETSKDKKERKQA. A coiled-coil region spans residues 9-31; the sequence is KKETSKDKKERKQAMQEARQQIT. Residues 32–52 form a helical membrane-spanning segment; sequence TVVLPTLAVVVLLIVVFVYVA.

This sequence belongs to the SMCO4 family.

It localises to the membrane. The sequence is that of Single-pass membrane and coiled-coil domain-containing protein 4 (smco4) from Taeniopygia guttata (Zebra finch).